The sequence spans 242 residues: Segregation and condensation protein A (242 aa).

Belongs to the ScpA family. Component of a cohesin-like complex composed of ScpA, ScpB and the Smc homodimer, in which ScpA and ScpB bind to the head domain of Smc. The presence of the three proteins is required for the association of the complex with DNA.

The protein localises to the cytoplasm. Its function is as follows. Participates in chromosomal partition during cell division. May act via the formation of a condensin-like complex containing Smc and ScpB that pull DNA away from mid-cell into both cell halves. The polypeptide is Segregation and condensation protein A (Lactococcus lactis subsp. cremoris (strain MG1363)).